The sequence spans 245 residues: 4-hydroxy-tetrahydrodipicolinate reductase (245 aa).

NAD(+)-binding positions include 7–12 (GARGKV), 75–77 (GTT), and 102–105 (APNF). H132 (proton donor/acceptor) is an active-site residue. H133 lines the (S)-2,3,4,5-tetrahydrodipicolinate pocket. Catalysis depends on K136, which acts as the Proton donor. 142–143 (GT) is a binding site for (S)-2,3,4,5-tetrahydrodipicolinate.

This sequence belongs to the DapB family.

It is found in the cytoplasm. The catalysed reaction is (S)-2,3,4,5-tetrahydrodipicolinate + NAD(+) + H2O = (2S,4S)-4-hydroxy-2,3,4,5-tetrahydrodipicolinate + NADH + H(+). It carries out the reaction (S)-2,3,4,5-tetrahydrodipicolinate + NADP(+) + H2O = (2S,4S)-4-hydroxy-2,3,4,5-tetrahydrodipicolinate + NADPH + H(+). It participates in amino-acid biosynthesis; L-lysine biosynthesis via DAP pathway; (S)-tetrahydrodipicolinate from L-aspartate: step 4/4. Functionally, catalyzes the conversion of 4-hydroxy-tetrahydrodipicolinate (HTPA) to tetrahydrodipicolinate. The chain is 4-hydroxy-tetrahydrodipicolinate reductase from Mycolicibacterium smegmatis (strain ATCC 700084 / mc(2)155) (Mycobacterium smegmatis).